Consider the following 1034-residue polypeptide: Platelet endothelial aggregation receptor 1 (1034 aa).

Residues 1 to 18 form the signal peptide; the sequence is MPLCPLLLLALGLRLTGT. Residues 19 to 754 lie on the Extracellular side of the membrane; that stretch reads LNSNDPNVCT…PTSPVTHNSL (736 aa). The region spanning 23–101 is the EMI domain; that stretch reads DPNVCTFWES…YYESRGACVP (79 aa). 3 cysteine pairs are disulfide-bonded: Cys-27/Cys-89, Cys-53/Cys-63, and Cys-88/Cys-99. Asn-150 carries an N-linked (GlcNAc...) asparagine glycan. EGF-like domains follow at residues 181-215, 223-258, 266-301, 309-344, and 398-433; these read YGPA…PSCN, DGFF…VICS, HGPN…DRCQ, FGQD…DRCT, and HGPG…PHCA. Intrachain disulfides connect Cys-185-Cys-196, Cys-189-Cys-203, Cys-205-Cys-214, Cys-233-Cys-246, and Cys-248-Cys-257. Asn-269 is a glycosylation site (N-linked (GlcNAc...) asparagine). Cystine bridges form between Cys-270/Cys-282, Cys-276/Cys-289, Cys-291/Cys-300, Cys-313/Cys-325, Cys-319/Cys-332, Cys-334/Cys-343, Cys-402/Cys-414, Cys-408/Cys-421, and Cys-423/Cys-432. Residue Asn-474 is glycosylated (N-linked (GlcNAc...) asparagine). EGF-like domains follow at residues 484–519, 575–605, 613–648, and 656–691; these read WGFN…AHCQ, SNTC…PSCQ, YGKR…PDCS, and WGLK…PNCL. 12 disulfides stabilise this stretch: Cys-488-Cys-500, Cys-494-Cys-507, Cys-509-Cys-518, Cys-578-Cys-586, Cys-580-Cys-593, Cys-595-Cys-604, Cys-617-Cys-629, Cys-622-Cys-636, Cys-638-Cys-647, Cys-660-Cys-672, Cys-666-Cys-679, and Cys-681-Cys-690. Residues 755–775 form a helical membrane-spanning segment; it reads GAVIGIAVLGTLVVALIALFI. Residues 776–1034 are Cytoplasmic-facing; it reads GYRQWQKGKE…PSPPSRRQDR (259 aa). The segment at 823-883 is disordered; that stretch reads TLSQCSPNPP…PHERGASHLD (61 aa). Over residues 851-883 the composition is skewed to basic and acidic residues; sequence RPSRAHGRENHVTLPADWKHRREPHERGASHLD. Residue Tyr-923 is modified to Phosphotyrosine. The interval 925 to 1034 is disordered; that stretch reads TIRDLPSLPG…PSPPSRRQDR (110 aa). Ser-951 bears the Phosphoserine mark. Polar residues predominate over residues 972–991; the sequence is DSGTYEQPSPLSHNEESLGS. Ser-1026 bears the Phosphoserine mark.

This sequence belongs to the MEGF family. In terms of assembly, interacts with SHC2 upon its aggregation-induced tyrosine phosphorylation. Interacts (via extracellular domain) with SVEP1. Phosphorylated in the intracellular domain on tyrosine residues. Phosphorylated on tyrosine residues by SRC. Tyrosine phosphorylation is detected upon platelet aggregation stimulated by collagen, TRAP and thrombin and platelet-platelet contacts but not after platelet activation. Tyrosine phosphorylation enhanced its association with SHC1 and SHC2. Phosphorylated in the intracellular domain on tyrosine residues. Phosphorylated when in the presence of SVEP1. As to expression, expressed in thymocytes, bone marrow stromal and osteogenic cells (at protein level). Strongly expressed in kidney and heart. Moderately expressed in lung, spleen, thymus, liver, brain, testis, skin and stomach. Expressed in hematopoietic stem progenitor cells.

It is found in the cell membrane. It localises to the cell projection. Its subcellular location is the lamellipodium. Functionally, required for SVEP1-mediated platelet activation, via its interaction with SVEP1 and subsequent activation of AKT/mTOR signaling. May be involved in the early stages of hematopoiesis. The chain is Platelet endothelial aggregation receptor 1 (Pear1) from Mus musculus (Mouse).